The sequence spans 360 residues: Phosphoserine aminotransferase (360 aa).

R42 provides a ligand contact to L-glutamate. 4 residues coordinate pyridoxal 5'-phosphate: W102, T152, D171, and Q194. K195 carries the N6-(pyridoxal phosphate)lysine modification. A pyridoxal 5'-phosphate-binding site is contributed by 237–238 (NT).

This sequence belongs to the class-V pyridoxal-phosphate-dependent aminotransferase family. SerC subfamily. Homodimer. It depends on pyridoxal 5'-phosphate as a cofactor.

The protein localises to the cytoplasm. It carries out the reaction O-phospho-L-serine + 2-oxoglutarate = 3-phosphooxypyruvate + L-glutamate. It catalyses the reaction 4-(phosphooxy)-L-threonine + 2-oxoglutarate = (R)-3-hydroxy-2-oxo-4-phosphooxybutanoate + L-glutamate. Its pathway is amino-acid biosynthesis; L-serine biosynthesis; L-serine from 3-phospho-D-glycerate: step 2/3. It participates in cofactor biosynthesis; pyridoxine 5'-phosphate biosynthesis; pyridoxine 5'-phosphate from D-erythrose 4-phosphate: step 3/5. Its function is as follows. Catalyzes the reversible conversion of 3-phosphohydroxypyruvate to phosphoserine and of 3-hydroxy-2-oxo-4-phosphonooxybutanoate to phosphohydroxythreonine. This is Phosphoserine aminotransferase from Coxiella burnetii (strain RSA 331 / Henzerling II).